Consider the following 1046-residue polypeptide: Multidrug resistance protein MexB (1046 aa).

Residues M1–P9 lie on the Cytoplasmic side of the membrane. A helical membrane pass occupies residues I10–L28. Residues S29–E339 lie on the Periplasmic side of the membrane. The helical transmembrane segment at V340 to L359 threads the bilayer. Residues Q360–T365 are Cytoplasmic-facing. A helical membrane pass occupies residues L366–A385. Topologically, residues F386–N391 are periplasmic. The helical transmembrane segment at T392–V413 threads the bilayer. Topologically, residues E414 to A441 are cytoplasmic. Residues L442–G460 form a helical membrane-spanning segment. The Periplasmic segment spans residues G461–T473. A helical membrane pass occupies residues I474 to M496. At L497–R538 the chain is on the cytoplasmic side. The chain crosses the membrane as a helical span at residues A539 to T557. Residues R558–Q871 are Periplasmic-facing. The chain crosses the membrane as a helical span at residues A872–Y891. At E892–P897 the chain is on the cytoplasmic side. The helical transmembrane segment at F898–M917 threads the bilayer. At R918–D923 the chain is on the periplasmic side. Residues V924–V945 form a helical membrane-spanning segment. The Cytoplasmic portion of the chain corresponds to E946–P972. The helical transmembrane segment at I973–T991 threads the bilayer. Topologically, residues G992–G1004 are periplasmic. The chain crosses the membrane as a helical span at residues V1005 to V1027. Residues S1028 to Q1046 lie on the Cytoplasmic side of the membrane.

Belongs to the resistance-nodulation-cell division (RND) (TC 2.A.6) family. Component of the MexAB-OprM multidrug efflux complex, composed of six MexA subunits forming a hexameric tube, binding to a MexB trimer, which interact with the trimeric OprM outer membrane channel protein. OprM is thought to not directly contact MexB; instead, MexA joins MexB and OprM by forming a funnel-like hexamer anchored to the inner membrane. MexA may initially form a hexameric ring complex with MexB prior to OprM, then OprM undergoes a conformational change as it contacts MexA, allowing the periplasmic gate to open. It is thought that, under high intracellular substrate concentration, MexB ejects substrate into the tunnel formed by MexA-OprM; as the substrate level declines, conformational changes in MexB cause efflux to reduce and stop and the complex shifts to the closed state. Acts as a substrate:proton antiporter and activity is enhanced significantly when in complex with MexA and OprM, in vitro.

It is found in the cell inner membrane. With respect to regulation, export of antibiotics and solvents is dramatically decreased in the presence of the protonophore carbonyl cyanide m-chlorophenylhydrazone (CCCP), therefore may be driven by a proton gradient. Antibiotic efflux is inhibited by pyridopyrimidine derivatives, such as ABI-PP, acting by binding to a hydrophobic pocket in MexB. The inner membrane transporter component of the MexAB-OprM efflux system that confers multidrug resistance. Functions as the major efflux pump for n-hexane and p-xylene efflux. Has been shown in one study to be involved in the active efflux of the autoinducer N-(3-oxododecanoyl) homoserine lactone, thereby playing an indirect role in quorum-sensing; but has been shown in another study not to be involved in efflux of this autoinducer. Over-expression of the pump increases antibiotic and solvent efflux capacities. Implicated in the secretion of the siderophore pyoverdine. In Pseudomonas aeruginosa (strain ATCC 15692 / DSM 22644 / CIP 104116 / JCM 14847 / LMG 12228 / 1C / PRS 101 / PAO1), this protein is Multidrug resistance protein MexB (mexB).